Reading from the N-terminus, the 390-residue chain is Tryptophan synthase beta chain 2 (390 aa).

Residue Lys83 is modified to N6-(pyridoxal phosphate)lysine.

It belongs to the TrpB family. Tetramer of two alpha and two beta chains. Pyridoxal 5'-phosphate is required as a cofactor.

It carries out the reaction (1S,2R)-1-C-(indol-3-yl)glycerol 3-phosphate + L-serine = D-glyceraldehyde 3-phosphate + L-tryptophan + H2O. It participates in amino-acid biosynthesis; L-tryptophan biosynthesis; L-tryptophan from chorismate: step 5/5. Functionally, the beta subunit is responsible for the synthesis of L-tryptophan from indole and L-serine. This chain is Tryptophan synthase beta chain 2 (trpB2), found in Methanothermobacter marburgensis (strain ATCC BAA-927 / DSM 2133 / JCM 14651 / NBRC 100331 / OCM 82 / Marburg) (Methanobacterium thermoautotrophicum).